We begin with the raw amino-acid sequence, 756 residues long: Tubulin glycylase 3B (756 aa).

The interval 104 to 123 (TPLPRTVTSSPTAPEAQKRQ) is disordered. A TTL domain is found at 272 to 629 (LEERMAFIED…DLPKNPTAAT (358 aa)). Residues 440-443 (QKYI), Lys453, and Asp455 contribute to the ATP site. The segment at 709–736 (ITKKKKLSASAGSSTAASAQPSTQNLTT) is disordered. Low complexity predominate over residues 716 to 727 (SASAGSSTAASA).

It is found in the cytoplasm. It localises to the cytoskeleton. The protein resides in the nucleus. Functionally, essential glycylase which modifies both tubulin and non-tubulin proteins, generating side chains of glycine on the gamma-carboxyl groups of specific glutamate residues of target proteins. Monoglycylates alpha-tubulin by adding a single glycine chain to generate monoglycine side chains, but is not involved in elongation step to generate polyglycine side chains on alpha-tubulin. Has the ability to both mono- and polyglycylate non-tubulin proteins such as up (Troponin T). Required for early steps of spermatogenesis. The sequence is that of Tubulin glycylase 3B (TTLL3B) from Drosophila melanogaster (Fruit fly).